The primary structure comprises 49 residues: Large ribosomal subunit protein bL33B (49 aa).

Belongs to the bacterial ribosomal protein bL33 family.

This chain is Large ribosomal subunit protein bL33B, found in Oceanobacillus iheyensis (strain DSM 14371 / CIP 107618 / JCM 11309 / KCTC 3954 / HTE831).